Here is a 523-residue protein sequence, read N- to C-terminus: Bifunctional purine biosynthesis protein PurH (523 aa).

Residues 1–150 enclose the MGS-like domain; sequence MSDVVPVRNA…KNHGDVAIAT (150 aa).

This sequence belongs to the PurH family.

It carries out the reaction (6R)-10-formyltetrahydrofolate + 5-amino-1-(5-phospho-beta-D-ribosyl)imidazole-4-carboxamide = 5-formamido-1-(5-phospho-D-ribosyl)imidazole-4-carboxamide + (6S)-5,6,7,8-tetrahydrofolate. The catalysed reaction is IMP + H2O = 5-formamido-1-(5-phospho-D-ribosyl)imidazole-4-carboxamide. It functions in the pathway purine metabolism; IMP biosynthesis via de novo pathway; 5-formamido-1-(5-phospho-D-ribosyl)imidazole-4-carboxamide from 5-amino-1-(5-phospho-D-ribosyl)imidazole-4-carboxamide (10-formyl THF route): step 1/1. It participates in purine metabolism; IMP biosynthesis via de novo pathway; IMP from 5-formamido-1-(5-phospho-D-ribosyl)imidazole-4-carboxamide: step 1/1. The sequence is that of Bifunctional purine biosynthesis protein PurH from Rhodopirellula baltica (strain DSM 10527 / NCIMB 13988 / SH1).